The primary structure comprises 394 residues: GDNF family receptor alpha-like (394 aa).

Positions 1-19 (MLVFIFLAVRLSSENESSS) are cleaved as a signal peptide. Residues 20–350 (QTNDCAYFMR…LTGFNSPFSG (331 aa)) lie on the Extracellular side of the membrane. N-linked (GlcNAc...) asparagine glycans are attached at residues Asn-65, Asn-101, and Asn-115. Intrachain disulfides connect Cys-132–Cys-190, Cys-139–Cys-145, Cys-156–Cys-168, Cys-163–Cys-211, Cys-192–Cys-199, Cys-221–Cys-292, Cys-228–Cys-234, Cys-245–Cys-276, Cys-253–Cys-259, Cys-270–Cys-317, and Cys-294–Cys-305. The tract at residues 150–229 (ALYLKACTAN…TCLSVIHTCR (80 aa)) is required for interaction with GDF15. Residues 351 to 371 (ELIYVVVCMVVTSGILSLVML) form a helical membrane-spanning segment. The Cytoplasmic portion of the chain corresponds to 372 to 394 (KLRIPSKKRDPAPIEIAGAVIIQ).

Belongs to the GDNFR family. Interacts (via the extracellular domain) with GDF15 and RET; receptor of GDF15, mediates cellular signaling through interaction with RET after GDF15-binding. Interaction with RET requires previous GDF15-binding. Cleaved and inactivated by MMP14, inhibiting the GDF15-GFRAL aversive response. As to expression, expressed in the brainstem, restricted to cells in the area postrema and the immediately adjacent region of the nucleus tractus solitarius. Detected at low levels in testis.

The protein localises to the cell membrane. Its function is as follows. Brainstem-restricted receptor for GDF15 hormone, which triggers an aversive response, characterized by nausea, vomiting, and/or loss of appetite in response to various stresses. The aversive response is both required to reduce continuing exposure to those stresses at the time of exposure and to promote avoidance behavior in the future. The GDF15-GFRAL aversive response is triggered by stresses, such as anticancer drugs (camptothecin or cisplatin), cancers or drugs such as metformin. Upon interaction with its ligand, GDF15, mediates the GDF15-induced autophosphorylation and activation of the RET tyrosine kinase receptor, leading to activation of MAPK- and AKT- signaling pathways. Ligand-binding activates GFRAL-expressing neurons localized in the area postrema and nucleus tractus solitarius of the brainstem. The GDF15-GFRAL signal induces expression of genes involved in metabolism, such as lipid metabolism in adipose tissues. The chain is GDNF family receptor alpha-like from Rattus norvegicus (Rat).